Reading from the N-terminus, the 559-residue chain is Germacrene A synthase 1 (559 aa).

Positions 312, 316, 456, 460, and 464 each coordinate Mg(2+). A DDXXD motif motif is present at residues 312 to 316; it reads DDTYD.

Belongs to the terpene synthase family. As to quaternary structure, monomer. The cofactor is Mg(2+). Mainly expressed in sunflower trichomes.

The enzyme catalyses (2E,6E)-farnesyl diphosphate = (+)-(R)-germacrene A + diphosphate. It functions in the pathway secondary metabolite biosynthesis; terpenoid biosynthesis. Its function is as follows. Sesquiterpene synthase involved in germacrene A biosynthesis. Germacrene A is a precursor of several sesquiterpene lactones. The protein is Germacrene A synthase 1 of Helianthus annuus (Common sunflower).